The following is a 137-amino-acid chain: MVKASANKSRRKVVTGLQVGSYVKVTDNSGAKVAMIIGVPGYHGRLRRIPPAGVGDMVVVTVKKGTPEMRHQVVRAIVVRQRKPFRRPDGTWVAFEDNAVVIVSEDGTPRGSEIRGPVAREAVERWPRIGNVASIVV.

It belongs to the universal ribosomal protein uL14 family. Part of the 50S ribosomal subunit. Forms a cluster with proteins L3 and L24e, part of which may contact the 16S rRNA in 2 intersubunit bridges.

Its function is as follows. Binds to 23S rRNA. Forms part of two intersubunit bridges in the 70S ribosome. The polypeptide is Large ribosomal subunit protein uL14 (Ignicoccus hospitalis (strain KIN4/I / DSM 18386 / JCM 14125)).